The chain runs to 282 residues: 2-dehydro-3-deoxyphosphooctonate aldolase (282 aa).

Belongs to the KdsA family.

The protein resides in the cytoplasm. The catalysed reaction is D-arabinose 5-phosphate + phosphoenolpyruvate + H2O = 3-deoxy-alpha-D-manno-2-octulosonate-8-phosphate + phosphate. It participates in carbohydrate biosynthesis; 3-deoxy-D-manno-octulosonate biosynthesis; 3-deoxy-D-manno-octulosonate from D-ribulose 5-phosphate: step 2/3. It functions in the pathway bacterial outer membrane biogenesis; lipopolysaccharide biosynthesis. The protein is 2-dehydro-3-deoxyphosphooctonate aldolase of Shewanella baltica (strain OS223).